The following is a 283-amino-acid chain: MKLVIVSGRSGSGKSVALRVLEDLGYYCVDNLPLQLIGPLLAQLKGNNDKVAISIDIRNMPEQEKALEKELARLPEGVELTSFFLNSSDKVLLKRYSETRRLHPLSRSKVSLQEAIKLEGKMLAPISNMVDHFIDTSNLNVYELADAVRQILLGRTDKELVIIFESFGFKHGMPTEADFMFDARFLPNPHWEPELRPLTGLDEPVKLFLERQVLVNKYIWQIENLLETWLPHLERNNRSYLTIAIGCTGGQHRSVYIAEQLAKRFANSHHKVEARHRELNAKA.

8–15 (GRSGSGKS) provides a ligand contact to ATP. Position 56–59 (56–59 (DIRN)) interacts with GTP.

It belongs to the RapZ-like family.

Functionally, displays ATPase and GTPase activities. The protein is Nucleotide-binding protein Sama_3091 of Shewanella amazonensis (strain ATCC BAA-1098 / SB2B).